The following is a 359-amino-acid chain: Mandelate racemase (359 aa).

Residue lysine 166 is the Proton acceptor; specific for S-mandelate of the active site. Positions 195, 221, and 247 each coordinate Mg(2+). Residue histidine 297 is the Proton acceptor; specific for R-mandelate of the active site. Position 317 (glutamate 317) interacts with substrate.

Belongs to the mandelate racemase/muconate lactonizing enzyme family. As to quaternary structure, homooctamer. The cofactor is Mg(2+).

It catalyses the reaction (S)-mandelate = (R)-mandelate. Its pathway is aromatic compound metabolism; (R)-mandelate degradation; benzoate from (R)-mandelate: step 1/4. This chain is Mandelate racemase (mdlA), found in Pseudomonas putida (Arthrobacter siderocapsulatus).